We begin with the raw amino-acid sequence, 298 residues long: Small ribosomal subunit protein uS2 (298 aa).

The segment at Glu-232–Glu-298 is disordered. The span at Phe-234–Pro-250 shows a compositional bias: acidic residues. The span at Glu-251–Ala-276 shows a compositional bias: low complexity.

It belongs to the universal ribosomal protein uS2 family.

In Acaryochloris marina (strain MBIC 11017), this protein is Small ribosomal subunit protein uS2.